A 398-amino-acid polypeptide reads, in one-letter code: Probable peptidoglycan glycosyltransferase FtsW (398 aa).

The Cytoplasmic segment spans residues 1–20 (MSTQAIRGARGLVLKWGAGR). A helical transmembrane segment spans residues 21-41 (FYLDTVLLSVSLGLMLFGFVM). The Periplasmic segment spans residues 42 to 57 (VSSASLHLGEKMASDS). A helical membrane pass occupies residues 58-78 (FYFPKHQLVHILLGLAAGWGA). Over 79-92 (ARVRLDTLERHSRS) the chain is Cytoplasmic. A helical transmembrane segment spans residues 93–113 (LFWAGIALLVLVLIPGVGKSV). At 114–121 (NGSVRWIN) the chain is on the periplasmic side. A helical transmembrane segment spans residues 122 to 142 (LFGLRVQVSEVFKLVAAIYVA). The Cytoplasmic segment spans residues 143–153 (GYISRHLDTVR). A helical membrane pass occupies residues 154–174 (TSVKGMIFPLSLLAIGAVLLL). Topologically, residues 175–177 (KEP) are periplasmic. The helical transmembrane segment at 178–198 (DFGATAVVMATALGMLFLAGA) threads the bilayer. Arg199 is a topological domain (cytoplasmic). Residues 200 to 220 (LWVFVGLLGLVAVAGTVLIYT) traverse the membrane as a helical segment. The Periplasmic portion of the chain corresponds to 221–289 (AEYRLRRVLS…LFSVIGEELG (69 aa)). The helical transmembrane segment at 290–310 (LWGATTVILLFAIVVWRALAI) threads the bilayer. Residues 311 to 318 (GRLAERSG) lie on the Cytoplasmic side of the membrane. A helical transmembrane segment spans residues 319-339 (NLFAAFLAYGIGIWLGLQSFI). Residues 340-355 (NMGVNMGMLPTKGLTL) are Periplasmic-facing. The helical transmembrane segment at 356-376 (PLMSYGGGSMMVVCAAIGLLF) threads the bilayer. Topologically, residues 377–398 (RIRSEAVASFLGNGRKGLWPGV) are cytoplasmic.

This sequence belongs to the SEDS family. FtsW subfamily.

The protein localises to the cell inner membrane. It carries out the reaction [GlcNAc-(1-&gt;4)-Mur2Ac(oyl-L-Ala-gamma-D-Glu-L-Lys-D-Ala-D-Ala)](n)-di-trans,octa-cis-undecaprenyl diphosphate + beta-D-GlcNAc-(1-&gt;4)-Mur2Ac(oyl-L-Ala-gamma-D-Glu-L-Lys-D-Ala-D-Ala)-di-trans,octa-cis-undecaprenyl diphosphate = [GlcNAc-(1-&gt;4)-Mur2Ac(oyl-L-Ala-gamma-D-Glu-L-Lys-D-Ala-D-Ala)](n+1)-di-trans,octa-cis-undecaprenyl diphosphate + di-trans,octa-cis-undecaprenyl diphosphate + H(+). It functions in the pathway cell wall biogenesis; peptidoglycan biosynthesis. Its function is as follows. Peptidoglycan polymerase that is essential for cell division. This is Probable peptidoglycan glycosyltransferase FtsW from Methylococcus capsulatus (strain ATCC 33009 / NCIMB 11132 / Bath).